Consider the following 256-residue polypeptide: Protein CUSTOS (256 aa).

A compositionally biased stretch (low complexity) spans 1–19; the sequence is MVAPSGAMSDSENSSSSSS. Disordered stretches follow at residues 1–83, 127–163, and 227–256; these read MVAP…TPEF, FTSI…QRCR, and IQKK…KPEN. Ser-62 carries the post-translational modification Phosphoserine. Residues 63–83 show a composition bias toward basic and acidic residues; that stretch reads RRHEVNQHEEDGNDLRTTPEF. Thr-80 bears the Phosphothreonine mark. Position 139 is a phosphoserine (Ser-139). The Nucleolar localization signal (NLS) motif lies at 228–235; sequence QKKRKKKA. A compositionally biased stretch (basic residues) spans 228 to 237; sequence QKKRKKKAKK. The segment covering 246-256 has biased composition (low complexity); the sequence is PAECAAAKPEN.

The protein belongs to the CUSTOS family.

The protein resides in the nucleus envelope. Plays a role in the regulation of Wnt signaling pathway during early development. This is Protein CUSTOS from Mus musculus (Mouse).